We begin with the raw amino-acid sequence, 221 residues long: Ribosomal RNA large subunit methyltransferase E (221 aa).

S-adenosyl-L-methionine-binding residues include glycine 60, tryptophan 62, aspartate 89, aspartate 105, and aspartate 134. Catalysis depends on lysine 174, which acts as the Proton acceptor.

It belongs to the class I-like SAM-binding methyltransferase superfamily. RNA methyltransferase RlmE family.

The protein resides in the cytoplasm. It catalyses the reaction uridine(2552) in 23S rRNA + S-adenosyl-L-methionine = 2'-O-methyluridine(2552) in 23S rRNA + S-adenosyl-L-homocysteine + H(+). In terms of biological role, specifically methylates the uridine in position 2552 of 23S rRNA at the 2'-O position of the ribose in the fully assembled 50S ribosomal subunit. The polypeptide is Ribosomal RNA large subunit methyltransferase E (Cupriavidus necator (strain ATCC 17699 / DSM 428 / KCTC 22496 / NCIMB 10442 / H16 / Stanier 337) (Ralstonia eutropha)).